The sequence spans 259 residues: DNA repair protein RecO (259 aa).

It belongs to the RecO family.

In terms of biological role, involved in DNA repair and RecF pathway recombination. The chain is DNA repair protein RecO from Syntrophus aciditrophicus (strain SB).